The sequence spans 82 residues: DNA-directed RNA polymerase subunit Rpo5 (82 aa).

Belongs to the archaeal Rpo5/eukaryotic RPB5 RNA polymerase subunit family. As to quaternary structure, part of the RNA polymerase complex.

The protein resides in the cytoplasm. The catalysed reaction is RNA(n) + a ribonucleoside 5'-triphosphate = RNA(n+1) + diphosphate. Its function is as follows. DNA-dependent RNA polymerase (RNAP) catalyzes the transcription of DNA into RNA using the four ribonucleoside triphosphates as substrates. The protein is DNA-directed RNA polymerase subunit Rpo5 of Pyrococcus abyssi (strain GE5 / Orsay).